The following is a 90-amino-acid chain: Cell division topological specificity factor 2 (90 aa).

This sequence belongs to the MinE family.

Prevents the cell division inhibition by proteins MinC and MinD at internal division sites while permitting inhibition at polar sites. This ensures cell division at the proper site by restricting the formation of a division septum at the midpoint of the long axis of the cell. This is Cell division topological specificity factor 2 from Syntrophomonas wolfei subsp. wolfei (strain DSM 2245B / Goettingen).